Reading from the N-terminus, the 434-residue chain is 3-phosphoshikimate 1-carboxyvinyltransferase (434 aa).

Positions 22, 23, and 27 each coordinate 3-phosphoshikimate. Residue Lys22 coordinates phosphoenolpyruvate. Residues Gly93 and Arg121 each contribute to the phosphoenolpyruvate site. The 3-phosphoshikimate site is built by Ser168, Ser169, Gln170, Ser199, Asp320, and Lys347. Gln170 serves as a coordination point for phosphoenolpyruvate. The active-site Proton acceptor is the Asp320. Residues Arg351, Arg394, and Lys419 each contribute to the phosphoenolpyruvate site.

Belongs to the EPSP synthase family. Monomer.

The protein localises to the cytoplasm. It catalyses the reaction 3-phosphoshikimate + phosphoenolpyruvate = 5-O-(1-carboxyvinyl)-3-phosphoshikimate + phosphate. It participates in metabolic intermediate biosynthesis; chorismate biosynthesis; chorismate from D-erythrose 4-phosphate and phosphoenolpyruvate: step 6/7. Its function is as follows. Catalyzes the transfer of the enolpyruvyl moiety of phosphoenolpyruvate (PEP) to the 5-hydroxyl of shikimate-3-phosphate (S3P) to produce enolpyruvyl shikimate-3-phosphate and inorganic phosphate. The polypeptide is 3-phosphoshikimate 1-carboxyvinyltransferase (Burkholderia lata (strain ATCC 17760 / DSM 23089 / LMG 22485 / NCIMB 9086 / R18194 / 383)).